Here is a 160-residue protein sequence, read N- to C-terminus: Cytochrome b6-f complex subunit 4 (160 aa).

A run of 3 helical transmembrane segments spans residues 36–56 (LLYI…GLAV), 95–115 (LLGI…PFIE), and 128–148 (IAMA…IGAC).

It belongs to the cytochrome b family. PetD subfamily. As to quaternary structure, the 4 large subunits of the cytochrome b6-f complex are cytochrome b6, subunit IV (17 kDa polypeptide, PetD), cytochrome f and the Rieske protein, while the 4 small subunits are PetG, PetL, PetM and PetN. The complex functions as a dimer.

It is found in the cellular thylakoid membrane. Its function is as follows. Component of the cytochrome b6-f complex, which mediates electron transfer between photosystem II (PSII) and photosystem I (PSI), cyclic electron flow around PSI, and state transitions. The chain is Cytochrome b6-f complex subunit 4 from Prochlorococcus marinus (strain MIT 9303).